The primary structure comprises 160 residues: Ribosomal RNA large subunit methyltransferase H (160 aa).

Residues leucine 77 and glycine 109 each contribute to the S-adenosyl-L-methionine site.

Belongs to the RNA methyltransferase RlmH family. Homodimer.

It is found in the cytoplasm. The catalysed reaction is pseudouridine(1915) in 23S rRNA + S-adenosyl-L-methionine = N(3)-methylpseudouridine(1915) in 23S rRNA + S-adenosyl-L-homocysteine + H(+). In terms of biological role, specifically methylates the pseudouridine at position 1915 (m3Psi1915) in 23S rRNA. The protein is Ribosomal RNA large subunit methyltransferase H of Moorella thermoacetica (strain ATCC 39073 / JCM 9320).